We begin with the raw amino-acid sequence, 255 residues long: Taurine import ATP-binding protein TauB (255 aa).

The ABC transporter domain maps to 2 to 229; sequence LQISHLYADY…RFVAGESSRS (228 aa). 34 to 41 contributes to the ATP binding site; that stretch reads GPSGCGKT.

It belongs to the ABC transporter superfamily. Taurine importer (TC 3.A.1.17.1) family. As to quaternary structure, the complex is composed of two ATP-binding proteins (TauB), two transmembrane proteins (TauC) and a solute-binding protein (TauA).

It is found in the cell inner membrane. The enzyme catalyses taurine(out) + ATP + H2O = taurine(in) + ADP + phosphate + H(+). Functionally, part of the ABC transporter complex TauABC involved in taurine import. Responsible for energy coupling to the transport system. In Shigella dysenteriae serotype 1 (strain Sd197), this protein is Taurine import ATP-binding protein TauB.